The primary structure comprises 380 residues: Cytochrome b (380 aa).

The next 4 membrane-spanning stretches (helical) occupy residues 33-53 (FGSL…FLAM), 77-98 (WLIR…YMHI), 113-133 (WNIG…GYVL), and 178-198 (FFAF…IHLL). Residues histidine 83 and histidine 97 each contribute to the heme b site. 2 residues coordinate heme b: histidine 182 and histidine 196. Histidine 201 is a binding site for a ubiquinone. Transmembrane regions (helical) follow at residues 226-246 (YKDL…ALFS), 288-308 (LGGV…PLLH), 320-340 (ITQF…WIGG), and 347-367 (FIII…VLFP).

This sequence belongs to the cytochrome b family. In terms of assembly, the cytochrome bc1 complex contains 3 respiratory subunits (MT-CYB, CYC1 and UQCRFS1), 2 core proteins (UQCRC1 and UQCRC2) and probably 6 low-molecular weight proteins. The cofactor is heme b.

Its subcellular location is the mitochondrion inner membrane. Component of the ubiquinol-cytochrome c reductase complex (complex III or cytochrome b-c1 complex) that is part of the mitochondrial respiratory chain. The b-c1 complex mediates electron transfer from ubiquinol to cytochrome c. Contributes to the generation of a proton gradient across the mitochondrial membrane that is then used for ATP synthesis. This chain is Cytochrome b (mt-cyb), found in Carassius auratus (Goldfish).